A 147-amino-acid polypeptide reads, in one-letter code: Endoribonuclease YbeY (147 aa).

Zn(2+) is bound by residues His-109, His-113, and His-119.

It belongs to the endoribonuclease YbeY family. The cofactor is Zn(2+).

It is found in the cytoplasm. Its function is as follows. Single strand-specific metallo-endoribonuclease involved in late-stage 70S ribosome quality control and in maturation of the 3' terminus of the 16S rRNA. This Magnetococcus marinus (strain ATCC BAA-1437 / JCM 17883 / MC-1) protein is Endoribonuclease YbeY.